Reading from the N-terminus, the 68-residue chain is Large ribosomal subunit protein uL30 (68 aa).

The tract at residues 1–26 (MSAKKSASKATVTVQQIGSPLRREPS) is disordered. Over residues 8-18 (SKATVTVQQIG) the composition is skewed to polar residues.

The protein belongs to the universal ribosomal protein uL30 family. Part of the 50S ribosomal subunit.

The chain is Large ribosomal subunit protein uL30 from Parvibaculum lavamentivorans (strain DS-1 / DSM 13023 / NCIMB 13966).